The chain runs to 402 residues: Type II NADH:quinone oxidoreductase (402 aa).

FAD-binding positions include 12–16 (GAGYA), 39–40 (NK), and valine 83. The active site involves glutamate 172. FAD is bound by residues aspartate 302, 319-320 (AQ), and lysine 379.

Belongs to the NADH dehydrogenase family. Requires FAD as cofactor.

The protein localises to the cell membrane. The catalysed reaction is a quinone + NADH + H(+) = a quinol + NAD(+). Its function is as follows. Alternative, nonproton pumping NADH:quinone oxidoreductase that delivers electrons to the respiratory chain by oxidation of NADH and reduction of quinones, and contributes to the regeneration of NAD(+). The sequence is that of Type II NADH:quinone oxidoreductase from Staphylococcus haemolyticus (strain JCSC1435).